The following is a 453-amino-acid chain: MPDNDSHSLKSLPERQREDLFSAGSPSLEARKKQLSRLKTMIVDHEEAFTRALHADLGKPAFESFSSEIAVLLNEIDHVCKHIAKWNRQSRSRYLKMGYVESIKRKRHPYGSVLIIGSWNYPLQLSLMPAIGAIAAGNRCVIKPSEHAPATAELLKKIINDAFPPEQLLVVTGDAQTASHLTAAPFDLIFFTGSGQTGKAVAEQAARQLTPVILELGGKNPCIIDETGFSKEAVREIVWGKFLNAGQTCIAPDTLFVHQSVYEKMLNEISAAVSAFYGEQPRESSDYGRICTDDHFQKVIEFIGQGDVRHGGSYDRSDRFIAPTVLTDIEPGSPILQEEIFGPVLPVIPYTDMRTLLSSGRIQRDALTGYIFSKNKDNIQLFKEHMRSSTISVNQVIHHAASPHIAFGGVGTSGYGAYHGKAGFLAFSYEKQNTEHIITSIFKVNSRHILIQI.

Residues 1–20 (MPDNDSHSLKSLPERQREDL) are compositionally biased toward basic and acidic residues. Positions 1-23 (MPDNDSHSLKSLPERQREDLFSA) are disordered. Catalysis depends on residues Glu-215 and Cys-249.

This sequence belongs to the aldehyde dehydrogenase family.

It catalyses the reaction all-trans-4,4'-diapolycopene-4,4'-dial + 2 A + 2 H2O = all-trans-4,4'-diapolycopene-4,4'-dioate + 2 AH2 + 2 H(+). It functions in the pathway carotenoid biosynthesis. Involved in the biosynthesis of the major C30 carotenoid 4,4'-diapolycopene-4,4'-dioic acid, which protects B.firmus from peroxidative reactions. Catalyzes the oxidation of 4,4'-diapolycopene-4,4'-dial to yield 4,4'-diapolycopene-4,4'-dioic aci. The sequence is that of 4,4'-diapolycopene-4,4'-dial dehydrogenase from Cytobacillus firmus (Bacillus firmus).